The sequence spans 356 residues: Pavine N-methyltransferase (356 aa).

S-adenosyl-L-homocysteine is bound by residues F96, S97, G135, N159, Q163, D185, V186, and V201. S-adenosyl-L-methionine-binding residues include F96, S97, G135, N159, Q163, D185, V186, and V201. E205 is a binding site for (S)-tetrahydropapaverine. C331 is a catalytic residue.

This sequence belongs to the CFA/CMAS family. In terms of assembly, homodimer.

Its subcellular location is the cytoplasm. It carries out the reaction (+-)-pavine + S-adenosyl-L-methionine = N-methylpavine + S-adenosyl-L-homocysteine + H(+). The enzyme catalyses (S)-reticuline + S-adenosyl-L-methionine = (S)-tembetarine + S-adenosyl-L-homocysteine + H(+). It catalyses the reaction (S)-stylopine + S-adenosyl-L-methionine = (S)-cis-N-methylstylopine + S-adenosyl-L-homocysteine. The catalysed reaction is (S)-scoulerine + S-adenosyl-L-methionine = (S)-cis-N-methylscoulerine + S-adenosyl-L-homocysteine. It carries out the reaction (S)-tetrahydropapaverine + S-adenosyl-L-methionine = (S)-N-methyltetrahydropapaverine + S-adenosyl-L-homocysteine + H(+). The enzyme catalyses (S)-tetrahydropalmatine + S-adenosyl-L-methionine = (S)-cis-N-methyltetrahydropalmatine + S-adenosyl-L-homocysteine. It participates in alkaloid biosynthesis. Its activity is regulated as follows. In the presence of a racemic mixture of tetrahydropapaverine (THP), one molecule of (S)-THP binds in a productive mode, while one molecule of (R)-THP is bound next to it in a non-productive mode. The (R)-THP seems to inhibit the release of products from the enzyme when higher concentrations of the racemic substrate are added to the reaction. N-methyltransferase with a substrate preference for (+-)-pavine and (S)-reticuline, but also active with the protoberberines scoulerine and stylopine and, to a lesser extent, tetrahydropapaverine (THP) and tetrahydropalmatine. Is not active on (R)-reticuline, cryptopine, glaucine, codeine, canadaline, noscapine and berbamine. The sequence is that of Pavine N-methyltransferase from Thalictrum flavum subsp. glaucum (Yellow meadow rue).